Consider the following 273-residue polypeptide: uncharacterized protein (273 aa).

Residue 10-34 (VITGAATGIGQATAEVFANEGARVI) participates in NAD(+) binding. Substrate is bound at residue Ser-142. The active-site Proton acceptor is the Tyr-155.

It belongs to the short-chain dehydrogenases/reductases (SDR) family.

This is an uncharacterized protein from Bacillus subtilis (strain 168).